The chain runs to 512 residues: MELYYFSTFAFLLFCFILAKTLKKSGQSNLKLPLGPPPIPILGNAHQLIGGHTHHILRDLAKKYGPLMHLKTGEVSTIVASSPEIAEEMFKTHDVLFADRPSNIVAFKILSYDYSDVVISPYGNYWRQLRKISMMELFSQRSVQSFRSIREEEVLNFIKSIGSREGTKINLSKEISLLIYGITTRAAFGEKNKNTEEFIRLLDQLTVAVAEPNIADMFPSINFLKLISRSKYKIEKIHKNFDAIVQTILNHHKDRLANHKSSSHEENGEQNKDLVDVLLNIQQRGDFDTPLGDRSVKAVIFNIFSAGTETSSTTVDWAMCEMIKNPTIMKKAQEEVRKVYNEEGNVNETKLHQLKYLKAVIKETLRLHPPVPLLLPRECREQCEIKGYTIPSKSRVIVNAWAIGRDPNYWIEPENFNPERFLESEVDFKGNSFEYLPFGGGRRICPGITFALANIELPLAQLLFHFDWKLASDETNIDKLDMTESRGVTVRREDDLCLIPFPYSASSLKGKY.

Methionine 1 is a topological domain (lumenal). A helical membrane pass occupies residues 2 to 22; sequence ELYYFSTFAFLLFCFILAKTL. Over 23–512 the chain is Cytoplasmic; it reads KKSGQSNLKL…YSASSLKGKY (490 aa). Position 445 (cysteine 445) interacts with heme.

The protein belongs to the cytochrome P450 family. Heme is required as a cofactor. In terms of tissue distribution, expressed at low levels in roots, fruits, stems, flower buds and flowers, but highly expressed in young leaves. Detected in adaxial and abaxial epidermis cells.

It localises to the endoplasmic reticulum membrane. It carries out the reaction (-)-tabersonine + reduced [NADPH--hemoprotein reductase] + O2 = 16-hydroxytabersonine + oxidized [NADPH--hemoprotein reductase] + H2O + H(+). Functionally, involved in the foliar biosynthesis of vindoline, a precursor of vinblastine and vincristine. Hydroxylates specifically tabersonine, 2,3-dihydrotabersonine and 2,3-dihydro-3-hydroxytabersonine, but has no activity with naringenin, tryptamine, secologanin, strictosidine, ajmalicine, vindoline and catharanthine. The protein is Tabersonine 16-hydroxylase 2 of Catharanthus roseus (Madagascar periwinkle).